The primary structure comprises 224 residues: MVKVRFLGHAAFEIVGSKRILIDPFLTGNPAAAAKPEELEADLILITHAHGDHIGDAVEIAKRTGAKIVAMYDIANYLVENNPGITTIGMNYGPTEVDGVKIVQVPAWHSSSDGKYSIGNACGYVIELDGVKIYHAGDTFVFKDMELLNELYGPIDLALLPIGGHFTMGPKEAAKAVELLKPRKVVPMHYNTWPPIAADPEEFKKLVGDKAEVIILKPGEILEL.

Belongs to the UPF0173 family.

The chain is UPF0173 metal-dependent hydrolase TON_1314 from Thermococcus onnurineus (strain NA1).